A 258-amino-acid chain; its full sequence is 4-hydroxy-tetrahydrodipicolinate reductase (258 aa).

Residues 8-13 (GVTGRM), 93-95 (GTT), and 117-120 (AANF) contribute to the NAD(+) site. His-149 acts as the Proton donor/acceptor in catalysis. His-150 provides a ligand contact to (S)-2,3,4,5-tetrahydrodipicolinate. Lys-153 acts as the Proton donor in catalysis. Position 159–160 (159–160 (GT)) interacts with (S)-2,3,4,5-tetrahydrodipicolinate.

It belongs to the DapB family.

The protein localises to the cytoplasm. The catalysed reaction is (S)-2,3,4,5-tetrahydrodipicolinate + NAD(+) + H2O = (2S,4S)-4-hydroxy-2,3,4,5-tetrahydrodipicolinate + NADH + H(+). The enzyme catalyses (S)-2,3,4,5-tetrahydrodipicolinate + NADP(+) + H2O = (2S,4S)-4-hydroxy-2,3,4,5-tetrahydrodipicolinate + NADPH + H(+). The protein operates within amino-acid biosynthesis; L-lysine biosynthesis via DAP pathway; (S)-tetrahydrodipicolinate from L-aspartate: step 4/4. Its function is as follows. Catalyzes the conversion of 4-hydroxy-tetrahydrodipicolinate (HTPA) to tetrahydrodipicolinate. In Thermomicrobium roseum (strain ATCC 27502 / DSM 5159 / P-2), this protein is 4-hydroxy-tetrahydrodipicolinate reductase.